We begin with the raw amino-acid sequence, 313 residues long: Probable cell division protein WhiA (313 aa).

The segment at residues 280 to 313 (SLKELGAMLNPPIGKSGVNHRLKKLCSIADGLRQ) is a DNA-binding region (H-T-H motif).

This sequence belongs to the WhiA family.

In terms of biological role, involved in cell division and chromosome segregation. In Lachnoclostridium phytofermentans (strain ATCC 700394 / DSM 18823 / ISDg) (Clostridium phytofermentans), this protein is Probable cell division protein WhiA.